A 524-amino-acid chain; its full sequence is Homeobox protein engrailed-like SMOX-2 (524 aa).

The segment at 194–218 (SSSSSSSSSSSSSSSSSSCSTNSSS) is disordered. Residues 423-482 (LKRPRTSFTVPQLKRLSQEFEKNRYLDELRRKKLATELDLRESQVKIWFQNKRAKTKKAS) constitute a DNA-binding region (homeobox).

This sequence belongs to the engrailed homeobox family.

It localises to the nucleus. This chain is Homeobox protein engrailed-like SMOX-2 (SMOX-2), found in Schistosoma mansoni (Blood fluke).